The following is a 156-amino-acid chain: Transcription elongation factor GreA (156 aa).

Residues 45 to 66 (NAEYHSAKEKQSFIEGRIKELE) adopt a coiled-coil conformation.

This sequence belongs to the GreA/GreB family.

Its function is as follows. Necessary for efficient RNA polymerase transcription elongation past template-encoded arresting sites. The arresting sites in DNA have the property of trapping a certain fraction of elongating RNA polymerases that pass through, resulting in locked ternary complexes. Cleavage of the nascent transcript by cleavage factors such as GreA or GreB allows the resumption of elongation from the new 3'terminus. GreA releases sequences of 2 to 3 nucleotides. The sequence is that of Transcription elongation factor GreA from Jannaschia sp. (strain CCS1).